A 173-amino-acid polypeptide reads, in one-letter code: Lens fiber membrane intrinsic protein (173 aa).

Topologically, residues 1–3 (MYS) are cytoplasmic. Residues 4–24 (FMGGGLFCAWVGTILLVVATA) traverse the membrane as a helical segment. At 25–66 (TDHWMQYRLSGSFAHQGLWRYCLGNKCFLQTESIAYWNATRA) the chain is on the extracellular side. C-linked (Man) tryptophan glycosylation is found at W43 and W61. The N-linked (GlcNAc...) asparagine glycan is linked to N62. Residues 67–87 (FMILSALCATSGIIMGVLAFA) form a helical membrane-spanning segment. Over 88-98 (QQSTFTRLSRP) the chain is Cytoplasmic. Residues 99 to 119 (FSAGIMFFASTLFVLLALAIY) form a helical membrane-spanning segment. Residues 120–140 (TGVTVSFLGRRFGDWRFSWSY) lie on the Extracellular side of the membrane. A helical membrane pass occupies residues 141–161 (ILGWVALLMTFFAGIFYMCAY). Topologically, residues 162–173 (RMHECRRLSTPR) are cytoplasmic. S170 carries the post-translational modification Phosphoserine. T171 carries the post-translational modification Phosphothreonine.

This sequence belongs to the PMP-22/EMP/MP20 family. As to quaternary structure, seems to be associated with itself or another lens membrane component via disulfide bonds. Eye lens specific.

It is found in the membrane. Its function is as follows. Present in the thicker 16-17 nm junctions of mammalian lens fiber cells, where it may contribute to cell junctional organization. Acts as a receptor for calmodulin. May play an important role in both lens development and cataractogenesis. The chain is Lens fiber membrane intrinsic protein (Lim2) from Rattus norvegicus (Rat).